The following is a 673-amino-acid chain: tRNA 5-methylaminomethyl-2-thiouridine biosynthesis bifunctional protein MnmC (673 aa).

The interval 1–245 is tRNA (mnm(5)s(2)U34)-methyltransferase; that stretch reads MSHAPIQTAA…KREMLIGELP (245 aa). Residues 272-673 are FAD-dependent cmnm(5)s(2)U34 oxidoreductase; that stretch reads IGGGVASALT…VRKLLKGRAV (402 aa).

The protein in the N-terminal section; belongs to the methyltransferase superfamily. tRNA (mnm(5)s(2)U34)-methyltransferase family. This sequence in the C-terminal section; belongs to the DAO family. The cofactor is FAD.

The protein resides in the cytoplasm. It catalyses the reaction 5-aminomethyl-2-thiouridine(34) in tRNA + S-adenosyl-L-methionine = 5-methylaminomethyl-2-thiouridine(34) in tRNA + S-adenosyl-L-homocysteine + H(+). Functionally, catalyzes the last two steps in the biosynthesis of 5-methylaminomethyl-2-thiouridine (mnm(5)s(2)U) at the wobble position (U34) in tRNA. Catalyzes the FAD-dependent demodification of cmnm(5)s(2)U34 to nm(5)s(2)U34, followed by the transfer of a methyl group from S-adenosyl-L-methionine to nm(5)s(2)U34, to form mnm(5)s(2)U34. In Serratia proteamaculans (strain 568), this protein is tRNA 5-methylaminomethyl-2-thiouridine biosynthesis bifunctional protein MnmC.